The primary structure comprises 380 residues: Glucose-1-phosphate adenylyltransferase (380 aa).

Alpha-D-glucose 1-phosphate contacts are provided by residues Gly164, 179-180, and Ser190; that span reads EK.

Belongs to the bacterial/plant glucose-1-phosphate adenylyltransferase family. Homotetramer.

It carries out the reaction alpha-D-glucose 1-phosphate + ATP + H(+) = ADP-alpha-D-glucose + diphosphate. It functions in the pathway glycan biosynthesis; glycogen biosynthesis. Functionally, involved in the biosynthesis of ADP-glucose, a building block required for the elongation reactions to produce glycogen. Catalyzes the reaction between ATP and alpha-D-glucose 1-phosphate (G1P) to produce pyrophosphate and ADP-Glc. This chain is Glucose-1-phosphate adenylyltransferase, found in Streptococcus sanguinis (strain SK36).